We begin with the raw amino-acid sequence, 490 residues long: Membrane-bound lytic murein transglycosylase F (490 aa).

The N-terminal stretch at 1 to 32 (MFALTAYRLRCAAWLLATGIFLLLAGCSEAKA) is a signal peptide. The interval 33 to 269 (PTALERVQKE…RLKDRYYGHV (237 aa)) is non-LT domain. Residues 270 to 490 (DVLGYVGAYT…PDDDEGDGKL (221 aa)) form an LT domain region. The active site involves Glu-316. The segment at 467-490 (AESGLHLPGVNKTRPDDDEGDGKL) is disordered.

The protein in the N-terminal section; belongs to the bacterial solute-binding protein 3 family. In the C-terminal section; belongs to the transglycosylase Slt family.

It localises to the cell outer membrane. It catalyses the reaction Exolytic cleavage of the (1-&gt;4)-beta-glycosidic linkage between N-acetylmuramic acid (MurNAc) and N-acetylglucosamine (GlcNAc) residues in peptidoglycan, from either the reducing or the non-reducing ends of the peptidoglycan chains, with concomitant formation of a 1,6-anhydrobond in the MurNAc residue.. Functionally, murein-degrading enzyme that degrades murein glycan strands and insoluble, high-molecular weight murein sacculi, with the concomitant formation of a 1,6-anhydromuramoyl product. Lytic transglycosylases (LTs) play an integral role in the metabolism of the peptidoglycan (PG) sacculus. Their lytic action creates space within the PG sacculus to allow for its expansion as well as for the insertion of various structures such as secretion systems and flagella. This is Membrane-bound lytic murein transglycosylase F from Pseudomonas paraeruginosa (strain DSM 24068 / PA7) (Pseudomonas aeruginosa (strain PA7)).